Here is a 217-residue protein sequence, read N- to C-terminus: Large ribosomal subunit protein uL3 (217 aa).

The segment at 127–162 (GFSRGPMSHGSKNHRAPGSTGAGTTPGRIYPGKRMA) is disordered. Residues 142–153 (APGSTGAGTTPG) are compositionally biased toward low complexity.

This sequence belongs to the universal ribosomal protein uL3 family. Part of the 50S ribosomal subunit. Forms a cluster with proteins L14 and L19.

In terms of biological role, one of the primary rRNA binding proteins, it binds directly near the 3'-end of the 23S rRNA, where it nucleates assembly of the 50S subunit. The polypeptide is Large ribosomal subunit protein uL3 (Prochlorococcus marinus (strain MIT 9312)).